Reading from the N-terminus, the 193-residue chain is Protein Syd (193 aa).

Belongs to the Syd family.

The protein localises to the cell inner membrane. In terms of biological role, interacts with the SecY protein in vivo. May bind preferentially to an uncomplexed state of SecY, thus functioning either as a chelating agent for excess SecY in the cell or as a regulatory factor that negatively controls the translocase function. This chain is Protein Syd, found in Tolumonas auensis (strain DSM 9187 / NBRC 110442 / TA 4).